An 839-amino-acid polypeptide reads, in one-letter code: Thymine dioxygenase JBP1 (839 aa).

Residues 86-288 (KVCGVLIPKA…RLSCVFYYRA (203 aa)) form a thymine dioxygenase region. 3 residues coordinate Fe cation: histidine 213, aspartate 215, and histidine 263. A 2-oxoglutarate-binding site is contributed by arginine 279. Residues 415–583 (KGDILNEAMN…EIEQARRRAP (169 aa)) are DNA-binding JBP1 domain.

The protein belongs to the TET family. JBP1 subfamily. Monomer. Binds to DNA as a monomer. It depends on Fe(2+) as a cofactor.

It is found in the nucleus. It catalyses the reaction thymine + 2-oxoglutarate + O2 = 5-hydroxymethyluracil + succinate + CO2. In terms of biological role, dioxygenase that catalyzes the first step of DNA base J (beta-d-glucosyl-HOMedU) biosynthesis by converting thymine to 5-hydroxymethyluracil (HOMedU). DNA base J is a hypermodified thymidine residue found in the genome of kinetoplastid parasites, which is localized primarily to repetitive DNA, namely the telomeres, and is implicated in the regulation of antigenic variation. Also specifically binds to base J-containing DNA (J-DNA). Involved in propagation and maintenance of DNA base J synthesis initiated by JBP2 by specifically binding already synthesized DNA base J and propagating J synthesis. Thymine dioxygenase activity and J-DNA-binding are independent functions. The protein is Thymine dioxygenase JBP1 (JBP1) of Trypanosoma brucei brucei.